A 235-amino-acid chain; its full sequence is tRNA (cytidine-2'-O-)-methyltransferase TrmJ (235 aa).

S-adenosyl-L-methionine is bound by residues 77-79, glycine 111, isoleucine 131, and 138-140; these read TSS and PVL.

Belongs to the class IV-like SAM-binding methyltransferase superfamily. RNA methyltransferase TrmH family. As to quaternary structure, homodimer.

The protein resides in the cytoplasm. It catalyses the reaction cytidine(32) in tRNA + S-adenosyl-L-methionine = 2'-O-methylcytidine(32) in tRNA + S-adenosyl-L-homocysteine + H(+). Catalyzes the formation of 2'O-methylated cytidine (Cm32) at position 32 in tRNA. Is specific for cytidine. The sequence is that of tRNA (cytidine-2'-O-)-methyltransferase TrmJ from Sulfolobus acidocaldarius (strain ATCC 33909 / DSM 639 / JCM 8929 / NBRC 15157 / NCIMB 11770).